The chain runs to 485 residues: Membrane-bound lytic murein transglycosylase F (485 aa).

An N-terminal signal peptide occupies residues Met1–Glu29. The non-LT domain stretch occupies residues Lys30 to Val267. The interval Asp268–Met485 is LT domain. Glu314 is a catalytic residue. The disordered stretch occupies residues Glu465–Met485. Over residues Asn474–Met485 the composition is skewed to basic and acidic residues.

In the N-terminal section; belongs to the bacterial solute-binding protein 3 family. The protein in the C-terminal section; belongs to the transglycosylase Slt family.

The protein resides in the cell outer membrane. The catalysed reaction is Exolytic cleavage of the (1-&gt;4)-beta-glycosidic linkage between N-acetylmuramic acid (MurNAc) and N-acetylglucosamine (GlcNAc) residues in peptidoglycan, from either the reducing or the non-reducing ends of the peptidoglycan chains, with concomitant formation of a 1,6-anhydrobond in the MurNAc residue.. In terms of biological role, murein-degrading enzyme that degrades murein glycan strands and insoluble, high-molecular weight murein sacculi, with the concomitant formation of a 1,6-anhydromuramoyl product. Lytic transglycosylases (LTs) play an integral role in the metabolism of the peptidoglycan (PG) sacculus. Their lytic action creates space within the PG sacculus to allow for its expansion as well as for the insertion of various structures such as secretion systems and flagella. The sequence is that of Membrane-bound lytic murein transglycosylase F from Pseudomonas putida (strain ATCC 47054 / DSM 6125 / CFBP 8728 / NCIMB 11950 / KT2440).